The primary structure comprises 180 residues: Large ribosomal subunit protein uL5 (180 aa).

Belongs to the universal ribosomal protein uL5 family. Part of the 50S ribosomal subunit; part of the 5S rRNA/L5/L18/L25 subcomplex. Contacts the 5S rRNA and the P site tRNA. Forms a bridge to the 30S subunit in the 70S ribosome.

Functionally, this is one of the proteins that bind and probably mediate the attachment of the 5S RNA into the large ribosomal subunit, where it forms part of the central protuberance. In the 70S ribosome it contacts protein S13 of the 30S subunit (bridge B1b), connecting the 2 subunits; this bridge is implicated in subunit movement. Contacts the P site tRNA; the 5S rRNA and some of its associated proteins might help stabilize positioning of ribosome-bound tRNAs. This chain is Large ribosomal subunit protein uL5, found in Chlamydia felis (strain Fe/C-56) (Chlamydophila felis).